Reading from the N-terminus, the 349-residue chain is Anthranilate phosphoribosyltransferase (349 aa).

5-phospho-alpha-D-ribose 1-diphosphate is bound by residues Gly87, 90 to 91, Thr95, 97 to 100, 115 to 123, and Ser127; these read GD, NIST, and KHGNRSVSS. Gly87 is a binding site for anthranilate. Residue Ser99 coordinates Mg(2+). Asn118 provides a ligand contact to anthranilate. Arg173 is a binding site for anthranilate. Mg(2+) contacts are provided by Asp231 and Glu232.

Belongs to the anthranilate phosphoribosyltransferase family. As to quaternary structure, homodimer. Mg(2+) serves as cofactor.

The catalysed reaction is N-(5-phospho-beta-D-ribosyl)anthranilate + diphosphate = 5-phospho-alpha-D-ribose 1-diphosphate + anthranilate. It functions in the pathway amino-acid biosynthesis; L-tryptophan biosynthesis; L-tryptophan from chorismate: step 2/5. Catalyzes the transfer of the phosphoribosyl group of 5-phosphorylribose-1-pyrophosphate (PRPP) to anthranilate to yield N-(5'-phosphoribosyl)-anthranilate (PRA). The chain is Anthranilate phosphoribosyltransferase from Shewanella loihica (strain ATCC BAA-1088 / PV-4).